The following is a 261-amino-acid chain: Imidazole glycerol phosphate synthase subunit HisF (261 aa).

Catalysis depends on residues D16 and D135.

Belongs to the HisA/HisF family. In terms of assembly, heterodimer of HisH and HisF.

Its subcellular location is the cytoplasm. It carries out the reaction 5-[(5-phospho-1-deoxy-D-ribulos-1-ylimino)methylamino]-1-(5-phospho-beta-D-ribosyl)imidazole-4-carboxamide + L-glutamine = D-erythro-1-(imidazol-4-yl)glycerol 3-phosphate + 5-amino-1-(5-phospho-beta-D-ribosyl)imidazole-4-carboxamide + L-glutamate + H(+). Its pathway is amino-acid biosynthesis; L-histidine biosynthesis; L-histidine from 5-phospho-alpha-D-ribose 1-diphosphate: step 5/9. Its function is as follows. IGPS catalyzes the conversion of PRFAR and glutamine to IGP, AICAR and glutamate. The HisF subunit catalyzes the cyclization activity that produces IGP and AICAR from PRFAR using the ammonia provided by the HisH subunit. This chain is Imidazole glycerol phosphate synthase subunit HisF, found in Mycolicibacterium vanbaalenii (strain DSM 7251 / JCM 13017 / BCRC 16820 / KCTC 9966 / NRRL B-24157 / PYR-1) (Mycobacterium vanbaalenii).